The primary structure comprises 157 residues: Ribonuclease H (157 aa).

The 142-residue stretch at asparagine 3–threonine 144 folds into the RNase H type-1 domain. Mg(2+) is bound by residues aspartate 12, glutamate 50, aspartate 72, and aspartate 136.

This sequence belongs to the RNase H family. In terms of assembly, monomer. It depends on Mg(2+) as a cofactor.

It is found in the cytoplasm. The catalysed reaction is Endonucleolytic cleavage to 5'-phosphomonoester.. In terms of biological role, endonuclease that specifically degrades the RNA of RNA-DNA hybrids. The polypeptide is Ribonuclease H (Idiomarina loihiensis (strain ATCC BAA-735 / DSM 15497 / L2-TR)).